Reading from the N-terminus, the 94-residue chain is C-C motif chemokine 26 (94 aa).

Residues 1–23 form the signal peptide; the sequence is MMGLSLASAVLLASLLSLHLGTA. 2 disulfides stabilise this stretch: C33–C57 and C34–C73.

This sequence belongs to the intercrine beta (chemokine CC) family. As to quaternary structure, monomer. As to expression, ubiquitously expressed at low levels in various tissues including heart and ovary.

It is found in the secreted. Chemoattractant for eosinophils and basophils. Acts as a ligand for C-C chemokine receptor CCR3 which triggers Ca(2+) mobilization in eosinophils. Also acts as a ligand for CX3C chemokine receptor CX3CR1, inducing cell chemotaxis. The polypeptide is C-C motif chemokine 26 (Homo sapiens (Human)).